Reading from the N-terminus, the 453-residue chain is Serine incorporator 1 (453 aa).

G2 carries the N-myristoyl glycine lipid modification. At 2-39 (GSVLGLCSMASWIPCLCGSAPCLLCRCCPSGNNSTVTR) the chain is on the cytoplasmic side. The chain crosses the membrane as a helical span at residues 40–60 (LIYALFLLVGVCVACVMLIPG). Topologically, residues 61 to 88 (MEEQLNKIPGFCENEKGVVPCNILVGYK) are lumenal. Residues 89–109 (AVYRLCFGLAMFYLLLSLLMI) traverse the membrane as a helical segment. Residues 110–123 (KVKSSSDPRAAVHN) are Cytoplasmic-facing. A helical transmembrane segment spans residues 124–144 (GFWFFKFAAAIAIIIGAFFIP). Residues 145 to 151 (EGTFTTV) lie on the Lumenal side of the membrane. The chain crosses the membrane as a helical span at residues 152 to 172 (WFYVGMAGAFCFILIQLVLLI). Over 173 to 197 (DFAHSWNESWVEKMEEGNSRCWYAA) the chain is Cytoplasmic. A helical transmembrane segment spans residues 198–218 (LLSATALNYLLSLVAIVLFFV). At 219-231 (YYTHPASCSENKA) the chain is on the lumenal side. Residues 232–252 (FISVNMLLCIGASVMSILPKI) traverse the membrane as a helical segment. At 253-259 (QESQPRS) the chain is on the cytoplasmic side. Residues 260-280 (GLLQSSVITVYTMYLTWSAMT) traverse the membrane as a helical segment. Residues 281-309 (NEPETNCNPSLLSIIGYNTTSTVPKEGQS) are Lumenal-facing. A helical transmembrane segment spans residues 310 to 330 (VQWWHAQGIIGLILFLLCVFY). The Cytoplasmic portion of the chain corresponds to 331 to 387 (SSIRTSNNSQVNKLTLTSDESTLIEDGGARSDGSLEDGDDVHRAVDNERDGVTYSYS). The residue at position 351 (S351) is a Phosphoserine. T352 carries the phosphothreonine modification. Phosphoserine is present on residues S361 and S364. The chain crosses the membrane as a helical span at residues 388-408 (FFHFMLFLASLYIMMTLTNWY). Over 409 to 426 (RYEPSREMKSQWTAVWVK) the chain is Lumenal. Residues 427-447 (ISSSWIGIVLYVWTLVAPLVL) form a helical membrane-spanning segment. Topologically, residues 448 to 453 (TNRDFD) are cytoplasmic.

The protein belongs to the TDE1 family. Interacts with SPTLC1.

It localises to the endoplasmic reticulum membrane. Functionally, enhances the incorporation of serine into phosphatidylserine and sphingolipids. The protein is Serine incorporator 1 (SERINC1) of Pongo abelii (Sumatran orangutan).